Reading from the N-terminus, the 212-residue chain is Urease accessory protein UreG 2 (212 aa).

11 to 18 (GPVGSGKT) lines the GTP pocket.

It belongs to the SIMIBI class G3E GTPase family. UreG subfamily. In terms of assembly, homodimer. UreD, UreF and UreG form a complex that acts as a GTP-hydrolysis-dependent molecular chaperone, activating the urease apoprotein by helping to assemble the nickel containing metallocenter of UreC. The UreE protein probably delivers the nickel.

It localises to the cytoplasm. Facilitates the functional incorporation of the urease nickel metallocenter. This process requires GTP hydrolysis, probably effectuated by UreG. This is Urease accessory protein UreG 2 from Brucella abortus (strain 2308).